The chain runs to 287 residues: 33 kDa chaperonin (287 aa).

Cystine bridges form between Cys-231/Cys-233 and Cys-264/Cys-267.

This sequence belongs to the HSP33 family. Under oxidizing conditions two disulfide bonds are formed involving the reactive cysteines. Under reducing conditions zinc is bound to the reactive cysteines and the protein is inactive.

The protein resides in the cytoplasm. Its function is as follows. Redox regulated molecular chaperone. Protects both thermally unfolding and oxidatively damaged proteins from irreversible aggregation. Plays an important role in the bacterial defense system toward oxidative stress. The sequence is that of 33 kDa chaperonin from Thermosipho melanesiensis (strain DSM 12029 / CIP 104789 / BI429).